A 241-amino-acid polypeptide reads, in one-letter code: Small ribosomal subunit protein uS2 (241 aa).

The protein belongs to the universal ribosomal protein uS2 family.

The chain is Small ribosomal subunit protein uS2 from Buchnera aphidicola subsp. Cinara cedri (strain Cc).